The primary structure comprises 444 residues: Ras-related protein RabX (444 aa).

29-36 (GGDVCSKN) provides a ligand contact to GTP. An Effector region motif is present at residues 51-58 (LIQVFDDY). Position 73–77 (73–77 (EFSSI)) interacts with GTP. A disordered region spans residues 91–136 (ENNKNKNNNNNYNYNNNNYNNNNNNNNNNNNNNNNNNNNNNNNNNS). The segment covering 95 to 135 (NKNNNNNYNYNNNNYNNNNNNNNNNNNNNNNNNNNNNNNNN) has biased composition (low complexity). A GTP-binding site is contributed by 207–210 (NDSN). 2 disordered regions span residues 213-232 (TPNF…SNII) and 298-401 (LQGD…NNDL). Low complexity-rich tracts occupy residues 217-232 (SDSS…SNII) and 303-399 (NNNN…TYNN). Cys-439 carries S-palmitoyl cysteine lipidation. Cysteine methyl ester is present on Cys-441. Cys-441 is lipidated: S-geranylgeranyl cysteine. The propeptide at 442–444 (NLM) is removed in mature form.

It belongs to the small GTPase superfamily. Rab family.

It localises to the cell membrane. This Dictyostelium discoideum (Social amoeba) protein is Ras-related protein RabX (rabX).